The chain runs to 29 residues: Brevinin-2Rd (29 aa).

The cysteines at positions 23 and 29 are disulfide-linked.

In terms of tissue distribution, expressed by the skin glands.

The protein localises to the secreted. Its function is as follows. Antimicrobial peptide. This Pelophylax ridibundus (Marsh frog) protein is Brevinin-2Rd.